The chain runs to 582 residues: Hemagglutinin-neuraminidase (582 aa).

At 1 to 34 (MEPSKLFTMSDNATFAPGPVVNAADKKTFRTCFR) the chain is on the intravirion side. Residues 35–55 (ILVLSVQAVTLILVIVTLGEL) traverse the membrane as a helical segment. Over 56-582 (VRMINDQGLS…LPVLTRLTIT (527 aa)) the chain is Virion surface. Disulfide bonds link Cys178-Cys202, Cys192-Cys253, and Cys244-Cys257. 2 N-linked (GlcNAc...) asparagine; by host glycosylation sites follow: Asn284 and Asn329. 3 cysteine pairs are disulfide-bonded: Cys350/Cys471, Cys382/Cys392, and Cys465/Cys475. Residues Asn400 and Asn448 are each glycosylated (N-linked (GlcNAc...) asparagine; by host). N-linked (GlcNAc...) asparagine; by host glycosylation is present at Asn507. Cysteines 545 and 556 form a disulfide.

Belongs to the paramyxoviruses hemagglutinin-neuraminidase family. Homotetramer; composed of disulfide-linked homodimers. Interacts with F protein trimer.

It is found in the virion membrane. It localises to the host cell membrane. The catalysed reaction is Hydrolysis of alpha-(2-&gt;3)-, alpha-(2-&gt;6)-, alpha-(2-&gt;8)- glycosidic linkages of terminal sialic acid residues in oligosaccharides, glycoproteins, glycolipids, colominic acid and synthetic substrates.. In terms of biological role, attaches the virus to alpha-2,3-linked sialic acid-containing cell receptors and thereby initiating infection. Binding of HN protein to the receptor induces a conformational change that allows the F protein to trigger virion/cell membranes fusion. Binds to the glycan motifs sialyl Lewis (SLe) and GM2 ganglioside (GM2-glycan). Functionally, neuraminidase activity ensures the efficient spread of the virus by dissociating the mature virions from the neuraminic acid containing glycoproteins. The protein is Hemagglutinin-neuraminidase of Mumps orthorubulavirus (MuV).